The chain runs to 420 residues: Tryptophan synthase beta chain (420 aa).

N6-(pyridoxal phosphate)lysine is present on K100.

This sequence belongs to the TrpB family. As to quaternary structure, tetramer of two alpha and two beta chains. Requires pyridoxal 5'-phosphate as cofactor.

It carries out the reaction (1S,2R)-1-C-(indol-3-yl)glycerol 3-phosphate + L-serine = D-glyceraldehyde 3-phosphate + L-tryptophan + H2O. The protein operates within amino-acid biosynthesis; L-tryptophan biosynthesis; L-tryptophan from chorismate: step 5/5. In terms of biological role, the beta subunit is responsible for the synthesis of L-tryptophan from indole and L-serine. This Pyrobaculum islandicum (strain DSM 4184 / JCM 9189 / GEO3) protein is Tryptophan synthase beta chain.